The chain runs to 61 residues: Large ribosomal subunit protein eL20 (61 aa).

The protein belongs to the eukaryotic ribosomal protein eL20 family. Part of the 50S ribosomal subunit. Binds 23S rRNA.

The polypeptide is Large ribosomal subunit protein eL20 (Methanosarcina acetivorans (strain ATCC 35395 / DSM 2834 / JCM 12185 / C2A)).